The sequence spans 467 residues: Ethanolamine ammonia-lyase reactivase EutA (467 aa).

This sequence belongs to the EutA family.

It localises to the bacterial microcompartment. The protein operates within amine and polyamine degradation; ethanolamine degradation. Reactivates suicidally inhibited ethanolamine ammonia-lyase (EAL), cyanocobalamin-inactivated EAL and O(2)-inactivated EAL; requires Mg(2+), ATP and adenosylcobalamin. Reactivation probably occurs by the ATP-dependent exchange of cobalamin. Protects EAL from inhibition by CN-B12, does not have adenosylation activity. In terms of biological role, expression of the eut operon allows this bacteria to use ethanolamine as a carbon, nitrogen and energy source. It relies on cobalamin (vitamin B12) both as a cofactor for the ethanolamine ammonia-lyase (EAL) activity and to induce the operon. EA enhances bacterial survival in macrophages in a concentration-dependent manner, suggesting it is an important nutrient during infection. In Salmonella typhimurium (strain LT2 / SGSC1412 / ATCC 700720), this protein is Ethanolamine ammonia-lyase reactivase EutA.